The primary structure comprises 423 residues: MNIISVGVNHKTAPIEIRERIALSEVQNKEFITDLISSGLAHEAMVVSTCNRTELYVVPAMTEVTGEYLKEYLISFKDARKEVRPEHFFSRFYCGTARHLFEVSSAIDSLVLGEGQILGQVKDAYRIAAEVQAAGILITRLCHTAFSVAKKVKTKTKIMEGAVSVSYAAVELAQKIFSNLSMKKILLIGAGETGELAAKHMCQKNARNIVITNRTLSKAEALAEELGTGKVLPFESYKEYLHEFDIIITAVSTKEYVLREAEMHQSMQKRRLKPVIILDLGLPRNVDPDISRLQNMFLKDIDALKHIIDKNLEKRRGELPKVQAIIEEELVSFGQWINTLKVRPTIVDLQSKFIEIKEKELERYRYKVSEEELRRMEHLTERILKKILHHPIKMLKAPIDTSDSIPSRVNLVRNIFDLEEPNQ.

Substrate contacts are provided by residues 49–52, serine 109, 114–116, and glutamine 120; these read TCNR and EGQ. Residue cysteine 50 is the Nucleophile of the active site. 189–194 is a binding site for NADP(+); sequence GAGETG.

Belongs to the glutamyl-tRNA reductase family. In terms of assembly, homodimer.

It carries out the reaction (S)-4-amino-5-oxopentanoate + tRNA(Glu) + NADP(+) = L-glutamyl-tRNA(Glu) + NADPH + H(+). It functions in the pathway porphyrin-containing compound metabolism; protoporphyrin-IX biosynthesis; 5-aminolevulinate from L-glutamyl-tRNA(Glu): step 1/2. It participates in porphyrin-containing compound metabolism; chlorophyll biosynthesis. In terms of biological role, catalyzes the NADPH-dependent reduction of glutamyl-tRNA(Glu) to glutamate 1-semialdehyde (GSA). This is Glutamyl-tRNA reductase from Chlorobium limicola (strain DSM 245 / NBRC 103803 / 6330).